Reading from the N-terminus, the 353-residue chain is Histidinol-phosphate aminotransferase 1 (353 aa).

Lys211 is modified (N6-(pyridoxal phosphate)lysine).

This sequence belongs to the class-II pyridoxal-phosphate-dependent aminotransferase family. Histidinol-phosphate aminotransferase subfamily. In terms of assembly, homodimer. The cofactor is pyridoxal 5'-phosphate.

The catalysed reaction is L-histidinol phosphate + 2-oxoglutarate = 3-(imidazol-4-yl)-2-oxopropyl phosphate + L-glutamate. It participates in amino-acid biosynthesis; L-histidine biosynthesis; L-histidine from 5-phospho-alpha-D-ribose 1-diphosphate: step 7/9. The sequence is that of Histidinol-phosphate aminotransferase 1 (hisC1) from Nostoc sp. (strain PCC 7120 / SAG 25.82 / UTEX 2576).